A 328-amino-acid polypeptide reads, in one-letter code: NADH:quinone reductase (328 aa).

FMN-binding positions include 22–24, Thr-75, Lys-124, Ala-150, 178–180, and 201–202; these read GMQ, SGG, and GT.

The protein belongs to the nitronate monooxygenase family. Monomer. It depends on FMN as a cofactor.

The enzyme catalyses a quinone + NADH + H(+) = a quinol + NAD(+). In terms of biological role, catalyzes the NADH-dependent reduction of a broad spectrum of quinone substrates, generating the corresponding hydroquinones. Highly prefers NADH to NADPH as a reducing substrate. Also displays a small NADH oxidase activity. Does not exhibit nitronate monooxygenase activity; is inactive against propionate 3-nitronate, 3-nitropropionate, nitroethane, 1-nitropropane, 2-nitropropane, and the anionic forms ethylnitronate, propyl-1-nitronate, and propyl-2-nitronate. Has no azoreductase activity since it is not able to reduce the azo dye methyl red with NADH. May be required to maintain an appropriate [NAD(+)]/[NADH] ratio for the catabolism of fatty acids in P.aeruginosa PAO1. The chain is NADH:quinone reductase from Pseudomonas aeruginosa (strain ATCC 15692 / DSM 22644 / CIP 104116 / JCM 14847 / LMG 12228 / 1C / PRS 101 / PAO1).